Here is a 72-residue protein sequence, read N- to C-terminus: Translation initiation factor IF-1 (72 aa).

Positions alanine 2–arginine 72 constitute an S1-like domain.

It belongs to the IF-1 family. As to quaternary structure, component of the 30S ribosomal translation pre-initiation complex which assembles on the 30S ribosome in the order IF-2 and IF-3, IF-1 and N-formylmethionyl-tRNA(fMet); mRNA recruitment can occur at any time during PIC assembly.

It localises to the cytoplasm. Functionally, one of the essential components for the initiation of protein synthesis. Stabilizes the binding of IF-2 and IF-3 on the 30S subunit to which N-formylmethionyl-tRNA(fMet) subsequently binds. Helps modulate mRNA selection, yielding the 30S pre-initiation complex (PIC). Upon addition of the 50S ribosomal subunit IF-1, IF-2 and IF-3 are released leaving the mature 70S translation initiation complex. This chain is Translation initiation factor IF-1, found in Pasteurella multocida (strain Pm70).